The following is a 166-amino-acid chain: Phosphopantetheine adenylyltransferase (166 aa).

Thr-9 serves as a coordination point for substrate. Residues 9–10 (TF) and His-17 each bind ATP. The substrate site is built by Lys-41, Leu-78, and Arg-92. Residues 93–95 (GLR), Glu-103, and 128–134 (HQAIASK) contribute to the ATP site.

Belongs to the bacterial CoaD family. Homohexamer. Mg(2+) is required as a cofactor.

The protein localises to the cytoplasm. It catalyses the reaction (R)-4'-phosphopantetheine + ATP + H(+) = 3'-dephospho-CoA + diphosphate. It participates in cofactor biosynthesis; coenzyme A biosynthesis; CoA from (R)-pantothenate: step 4/5. Reversibly transfers an adenylyl group from ATP to 4'-phosphopantetheine, yielding dephospho-CoA (dPCoA) and pyrophosphate. This chain is Phosphopantetheine adenylyltransferase, found in Roseobacter denitrificans (strain ATCC 33942 / OCh 114) (Erythrobacter sp. (strain OCh 114)).